The chain runs to 319 residues: MLKLDLKERDSLDLRCIAGHHGLANPITISDLNRPGLVLSGFFDFVAYRRIQLFGRGEHAYLLALLEQGRYGAIEKMFTFDLPCCIFSHGITPPEKFLHLAEPSSCPILVTRLTSSELSLRLMRVLSNIFAPTIALHGVLVEVYGVGILISGDSGVGKSETALELIERGHRLVADDLVEISCVNGNSLIGRGVHKSIGHHMEIRGLGIINITQLYGVGSIRERKEVQMVVQLEEWNSSKAYDRLGTQELNTTILDVSVPLIEIPVRPGRNIPIILETAAMNERLKRMGYFSAKEFNQSVLKLMEQNAAHAPYYRPDDTY.

Active-site residues include histidine 137 and lysine 158. Position 152–159 (152–159 (GDSGVGKS)) interacts with ATP. Serine 159 contacts Mg(2+). The active-site Proton acceptor; for phosphorylation activity. Proton donor; for dephosphorylation activity is the aspartate 176. The segment at 201-210 (MEIRGLGIIN) is important for the catalytic mechanism of both phosphorylation and dephosphorylation. Glutamate 202 contributes to the Mg(2+) binding site. The active site involves arginine 243. An important for the catalytic mechanism of dephosphorylation region spans residues 264–269 (PVRPGR).

The protein belongs to the HPrK/P family. Homohexamer. It depends on Mg(2+) as a cofactor.

The catalysed reaction is [HPr protein]-L-serine + ATP = [HPr protein]-O-phospho-L-serine + ADP + H(+). It catalyses the reaction [HPr protein]-O-phospho-L-serine + phosphate + H(+) = [HPr protein]-L-serine + diphosphate. Its function is as follows. Catalyzes the ATP- as well as the pyrophosphate-dependent phosphorylation of a specific serine residue in HPr, a phosphocarrier protein of the phosphoenolpyruvate-dependent sugar phosphotransferase system (PTS). HprK/P also catalyzes the pyrophosphate-producing, inorganic phosphate-dependent dephosphorylation (phosphorolysis) of seryl-phosphorylated HPr (P-Ser-HPr). This is HPr kinase/phosphorylase from Treponema pallidum subsp. pallidum (strain SS14).